Here is a 356-residue protein sequence, read N- to C-terminus: Vanillin synthase, chloroplastic (356 aa).

N-linked (GlcNAc...) asparagine glycosylation is present at Asn122. Cystine bridges form between Cys159/Cys202 and Cys193/Cys235. Residue Cys162 is part of the active site. Asn251 is a glycosylation site (N-linked (GlcNAc...) asparagine). The cysteines at positions 293 and 343 are disulfide-linked. Residues His302 and Asn322 contribute to the active site.

It belongs to the peptidase C1 family. Forms homodimers, homotrimers and homotetramers. As to expression, accumulates in the inner part of vanilla pods (at protein level). Expressed in single cells located a few cell layers from the inner epidermis.

The protein localises to the plastid. It localises to the chloroplast. The enzyme catalyses (E)-ferulate + H2O = vanillin + acetate. It carries out the reaction 4-O-beta-D-glucosyl-trans-ferulate + H2O = 4-O-beta-D-glucosyl-vanillin + acetate. The protein operates within aromatic compound metabolism; phenylpropanoid biosynthesis. Functionally, involved in the biosynthesis of vanillin (4-hydroxy-3-methoxy-benzaldehyde) and derivative natural products, key components of vanilla pods flavor. Catalyzes the double carbon bond cleavage of ferulic acid to vanillin and of their respective glucosides via a coupled non-oxidative hydratase/lyase reaction. Inactive toward p-coumaric acid, caffeic acid and their glucosides derivatives. This chain is Vanillin synthase, chloroplastic, found in Vanilla planifolia (Vanilla).